A 330-amino-acid polypeptide reads, in one-letter code: HTH-type transcriptional regulator GanR (330 aa).

An HTH lacI-type domain is found at 2–57 (ATIKDIAQEAGFSISTVSRVLNNDESLSVPDETREKIYEAAEKLNYRKKTVRPLVK). The segment at residues 4 to 23 (IKDIAQEAGFSISTVSRVLN) is a DNA-binding region (H-T-H motif).

Negatively regulates the expression of the ganSPQAB operon. Inhibits transcription of the operon by binding to an operator in the promoter region. In the presence of galactobiose, GanR dissociates from the promoter, resulting in the expression of the gan operon. The protein is HTH-type transcriptional regulator GanR of Bacillus subtilis (strain 168).